Consider the following 184-residue polypeptide: Photosystem I assembly protein Ycf4 (184 aa).

Helical transmembrane passes span 22-42 (FFWA…GTSS) and 57-77 (IIFF…LFIS).

Belongs to the Ycf4 family.

It is found in the plastid. The protein localises to the chloroplast thylakoid membrane. Its function is as follows. Seems to be required for the assembly of the photosystem I complex. The chain is Photosystem I assembly protein Ycf4 from Aethionema cordifolium (Lebanon stonecress).